The primary structure comprises 653 residues: Fusexin 1 (653 aa).

An N-terminal signal peptide occupies residues 1-23 (MKNGLKASVVALFFLLAASSASA). Residues 24–559 (ATNSVDTVTY…MEKALSGNAG (536 aa)) are Extracellular-facing. 4 cysteine pairs are disulfide-bonded: cysteine 126–cysteine 166, cysteine 397–cysteine 440, cysteine 467–cysteine 490, and cysteine 502–cysteine 519. Residues 154–159 (DTWTGQ) form a fusion loop region. The helical transmembrane segment at 560-580 (ALTWAQLLLSFIGFLAGFALV) threads the bilayer. Over 581–600 (GVKLGKMVDGLATEFIPLSD) the chain is Cytoplasmic. A run of 2 helical transmembrane segments spans residues 601 to 621 (AVVR…AVYQ) and 622 to 642 (LVTN…TGYL). Residues 643–653 (YLKGTTPDINL) are Cytoplasmic-facing.

This sequence belongs to the HAP2/GCS1 family. Fusexin 1 subfamily. In terms of assembly, homotrimer stabilized by interdomain contacts and numerous Ca(2+) and Na(+) ions.

Its subcellular location is the cell surface. It is found in the cell membrane. Exhibits fusogenic activity. Mediates cell-cell fusion in mammalian cells (bilateral fusion). The chain is Fusexin 1 from Haloferax sp. (strain Q22).